Reading from the N-terminus, the 968-residue chain is Serine/threonine-protein kinase apg-1 (968 aa).

In terms of domain architecture, Protein kinase spans 24-329 (FVIDQEIGKG…FEDLFNHPVV (306 aa)). Residues 30 to 38 (IGKGSFAKV) and K53 contribute to the ATP site. The Proton acceptor role is filled by D167. 4 disordered regions span residues 334–500 (PGLV…ERAA), 528–585 (MYPQ…LGTS), 884–906 (LPKR…LSDE), and 939–968 (ASKA…SVPA). Basic and acidic residues-rich tracts occupy residues 350 to 361 (LKEERPVSRAED), 371 to 380 (LRKDLADREG), and 417 to 431 (PRED…KEAA). Polar residues-rich tracts occupy residues 441–452 (VQPSTSAPTRPS), 528–538 (MYPQQPQSPKS), and 545–557 (ATQQ…TSGA).

The protein belongs to the protein kinase superfamily. Ser/Thr protein kinase family. APG1/unc-51/ULK1 subfamily. As to quaternary structure, homodimer. Forms a ternary complex with ATG13 and ATG17.

It is found in the cytoplasm. It localises to the preautophagosomal structure membrane. The catalysed reaction is L-seryl-[protein] + ATP = O-phospho-L-seryl-[protein] + ADP + H(+). It catalyses the reaction L-threonyl-[protein] + ATP = O-phospho-L-threonyl-[protein] + ADP + H(+). Serine/threonine protein kinase involved in the cytoplasm to vacuole transport (Cvt) and found to be essential in autophagy, where it is required for the formation of autophagosomes. Involved in the clearance of protein aggregates which cannot be efficiently cleared by the proteasome. Required for selective autophagic degradation of the nucleus (nucleophagy) as well as for mitophagy which contributes to regulate mitochondrial quantity and quality by eliminating the mitochondria to a basal level to fulfill cellular energy requirements and preventing excess ROS production. Also involved in endoplasmic reticulum-specific autophagic process, in selective removal of ER-associated degradation (ERAD) substrates. Plays a key role in ATG9 and ATG23 cycling through the pre-autophagosomal structure and is necessary to promote ATG18 binding to ATG9 through phosphorylation of ATG9. Catalyzes phosphorylation of ATG4, decreasing the interaction between ATG4 and ATG8 and impairing deconjugation of PE-conjugated forms of ATG8. The protein is Serine/threonine-protein kinase apg-1 of Neurospora crassa (strain ATCC 24698 / 74-OR23-1A / CBS 708.71 / DSM 1257 / FGSC 987).